The chain runs to 226 residues: NADH-ubiquinone oxidoreductase chain 6 (226 aa).

Helical transmembrane passes span 1 to 21 (MNNF…ILVI), 27 to 47 (VISV…LVLL), 52 to 72 (IGIS…LFVI), 94 to 114 (PLAT…VPSF), 126 to 146 (IFKF…LGVG), and 185 to 205 (ALWL…PITL).

Belongs to the complex I subunit 6 family.

It localises to the mitochondrion inner membrane. The enzyme catalyses a ubiquinone + NADH + 5 H(+)(in) = a ubiquinol + NAD(+) + 4 H(+)(out). Its function is as follows. Core subunit of the mitochondrial membrane respiratory chain NADH dehydrogenase (Complex I) that is believed to belong to the minimal assembly required for catalysis. Complex I functions in the transfer of electrons from NADH to the respiratory chain. The immediate electron acceptor for the enzyme is believed to be ubiquinone. The chain is NADH-ubiquinone oxidoreductase chain 6 (ND6) from Mycosarcoma maydis (Corn smut fungus).